The chain runs to 129 residues: Glycine cleavage system H protein (129 aa).

The 83-residue stretch at 24–106 (SYTVGITEHA…YGEGWFFRVM (83 aa)) folds into the Lipoyl-binding domain. N6-lipoyllysine is present on K65.

This sequence belongs to the GcvH family. In terms of assembly, the glycine cleavage system is composed of four proteins: P, T, L and H. (R)-lipoate is required as a cofactor.

Its function is as follows. The glycine cleavage system catalyzes the degradation of glycine. The H protein shuttles the methylamine group of glycine from the P protein to the T protein. The chain is Glycine cleavage system H protein from Shewanella baltica (strain OS155 / ATCC BAA-1091).